Reading from the N-terminus, the 293-residue chain is Aromatic amino acid exporter YddG (293 aa).

Topologically, residues 1 to 6 are cytoplasmic; the sequence is MTSQKA. A helical membrane pass occupies residues 7-27; that stretch reads TLIGLVAIVLWSTMVGLIRGV. The region spanning 15-137 is the EamA 1 domain; the sequence is VLWSTMVGLI…IALTGVCWVL (123 aa). At 28–33 the chain is on the periplasmic side; the sequence is SEGLGP. The chain crosses the membrane as a helical span at residues 34–54; sequence VGGAAMIYSLSGLLLIFTVGL. Residues 55–63 lie on the Cytoplasmic side of the membrane; the sequence is PDIRRFPGR. A helical transmembrane segment spans residues 64–84; it reads YLIAGSVLFVSYEICLALSLG. The Periplasmic segment spans residues 85–92; sequence YAATRHQA. A helical membrane pass occupies residues 93 to 113; the sequence is IEVGMVNYLWPSLTILFAILF. The Cytoplasmic portion of the chain corresponds to 114 to 119; sequence NGQKTN. Residues 120–140 form a helical membrane-spanning segment; it reads WLIVPGLLIALTGVCWVLGGE. The Periplasmic segment spans residues 141–147; it reads NGLNPGE. The chain crosses the membrane as a helical span at residues 148–168; sequence IISNVATSPLSYLLAFLGAFI. The region spanning 167 to 285 is the EamA 2 domain; the sequence is FIWATYCTVT…AVMVCVGSLL (119 aa). Topologically, residues 169-182 are cytoplasmic; that stretch reads WATYCTVTNKYARG. A helical transmembrane segment spans residues 183-203; that stretch reads FNGITVFVLLTAVALWLHYFL. The Periplasmic portion of the chain corresponds to 204–207; sequence TPQP. A helical transmembrane segment spans residues 208–228; the sequence is AMIFSLPVIAKLFTAALTLGF. The Cytoplasmic segment spans residues 229–243; the sequence is AYAAWNVGILHGNVT. The helical transmembrane segment at 244-264 threads the bilayer; that stretch reads IMAVGSYFTPVMSSALAALLL. Residues 265-267 are Periplasmic-facing; sequence SSP. A helical transmembrane segment spans residues 268–288; that stretch reads LSFSFWQGAVMVCVGSLLCWL. The Cytoplasmic segment spans residues 289-293; it reads ATRRR.

The protein belongs to the drug/metabolite transporter (DMT) superfamily. Aromatic amino acid/paraquat exporter (ArAA/P-E) (TC 2.A.7.17) family.

It localises to the cell inner membrane. Functionally, amino acid transporter with broad substrate specificity. Required for resistance to methyl viologen. May function with OmpD porin. In Salmonella typhimurium (strain 14028s / SGSC 2262), this protein is Aromatic amino acid exporter YddG (yddG).